A 133-amino-acid polypeptide reads, in one-letter code: Phosphoribosyl-AMP cyclohydrolase (133 aa).

Asp82 serves as a coordination point for Mg(2+). Cys83 contacts Zn(2+). Asp84 and Asp86 together coordinate Mg(2+). 2 residues coordinate Zn(2+): Cys100 and Cys107.

Belongs to the PRA-CH family. Homodimer. The cofactor is Mg(2+). Requires Zn(2+) as cofactor.

Its subcellular location is the cytoplasm. The enzyme catalyses 1-(5-phospho-beta-D-ribosyl)-5'-AMP + H2O = 1-(5-phospho-beta-D-ribosyl)-5-[(5-phospho-beta-D-ribosylamino)methylideneamino]imidazole-4-carboxamide. It participates in amino-acid biosynthesis; L-histidine biosynthesis; L-histidine from 5-phospho-alpha-D-ribose 1-diphosphate: step 3/9. Functionally, catalyzes the hydrolysis of the adenine ring of phosphoribosyl-AMP. The polypeptide is Phosphoribosyl-AMP cyclohydrolase (Aromatoleum aromaticum (strain DSM 19018 / LMG 30748 / EbN1) (Azoarcus sp. (strain EbN1))).